The chain runs to 874 residues: Alanine--tRNA ligase (874 aa).

Residues His-564, His-568, Cys-665, and His-669 each coordinate Zn(2+).

This sequence belongs to the class-II aminoacyl-tRNA synthetase family. Requires Zn(2+) as cofactor.

It localises to the cytoplasm. The catalysed reaction is tRNA(Ala) + L-alanine + ATP = L-alanyl-tRNA(Ala) + AMP + diphosphate. Its function is as follows. Catalyzes the attachment of alanine to tRNA(Ala) in a two-step reaction: alanine is first activated by ATP to form Ala-AMP and then transferred to the acceptor end of tRNA(Ala). Also edits incorrectly charged Ser-tRNA(Ala) and Gly-tRNA(Ala) via its editing domain. This Paraburkholderia phymatum (strain DSM 17167 / CIP 108236 / LMG 21445 / STM815) (Burkholderia phymatum) protein is Alanine--tRNA ligase.